Reading from the N-terminus, the 238-residue chain is Probable transcriptional regulatory protein IL0164 (238 aa).

It belongs to the TACO1 family.

It is found in the cytoplasm. The chain is Probable transcriptional regulatory protein IL0164 from Idiomarina loihiensis (strain ATCC BAA-735 / DSM 15497 / L2-TR).